The sequence spans 102 residues: Small ribosomal subunit protein uS10 (102 aa).

Belongs to the universal ribosomal protein uS10 family. In terms of assembly, part of the 30S ribosomal subunit.

In terms of biological role, involved in the binding of tRNA to the ribosomes. This Syntrophus aciditrophicus (strain SB) protein is Small ribosomal subunit protein uS10.